We begin with the raw amino-acid sequence, 56 residues long: Ribosome biogenesis protein Nop10 (56 aa).

This sequence belongs to the NOP10 family.

Its function is as follows. Involved in ribosome biogenesis; more specifically in 18S rRNA pseudouridylation and in cleavage of pre-rRNA. The sequence is that of Ribosome biogenesis protein Nop10 from Saccharolobus islandicus (strain Y.N.15.51 / Yellowstone #2) (Sulfolobus islandicus).